The following is a 253-amino-acid chain: Ubiquinone biosynthesis O-methyltransferase (253 aa).

Residues R47, G78, D99, and M141 each coordinate S-adenosyl-L-methionine.

The protein belongs to the methyltransferase superfamily. UbiG/COQ3 family.

It carries out the reaction a 3-demethylubiquinol + S-adenosyl-L-methionine = a ubiquinol + S-adenosyl-L-homocysteine + H(+). The catalysed reaction is a 3-(all-trans-polyprenyl)benzene-1,2-diol + S-adenosyl-L-methionine = a 2-methoxy-6-(all-trans-polyprenyl)phenol + S-adenosyl-L-homocysteine + H(+). It participates in cofactor biosynthesis; ubiquinone biosynthesis. O-methyltransferase that catalyzes the 2 O-methylation steps in the ubiquinone biosynthetic pathway. This is Ubiquinone biosynthesis O-methyltransferase from Rhodopseudomonas palustris (strain ATCC BAA-98 / CGA009).